The primary structure comprises 270 residues: MEDSHKSNTSETAPQSGSTVQAAHISHIAQQVSSLSESEESQDSSDSIGSSQKTHGILARRPSYRKILKDLSSEDIRGRKGDGENPGVSAVTSMSVPTPIYQTSTGQYIAIAPNGALQLASPGTDGVQGLQTLTMTNSGSTQQGTTILQYAQTSDGQQILVPSNQVVVQTASGDMQTYQIRTTPSATSLPQTVVMTSPVTLTSQTSKTDDPQLKREIRLMKNREAARECRRKKKEYVKCLENRVAVLENQNKTLIEELKTLKDLYSNKSV.

Positions 1-91 (MEDSHKSNTS…DGENPGVSAV (91 aa)) are disordered. Polar residues predominate over residues 9–21 (TSETAPQSGSTVQ). The KID domain maps to 31–90 (QVSSLSESEESQDSSDSIGSSQKTHGILARRPSYRKILKDLSSEDIRGRKGDGENPGVSA). Position 63 is a phosphoserine; by CaMK1, CDK3, RPS6KA4 and RPS6KA5 (serine 63). The segment covering 67–83 (ILKDLSSEDIRGRKGDG) has biased composition (basic and acidic residues). Serine 197 is subject to Phosphoserine; by HIPK2. Residues lysine 207 and lysine 214 each participate in a glycyl lysine isopeptide (Lys-Gly) (interchain with G-Cter in SUMO2) cross-link. Residues 212-270 (QLKREIRLMKNREAARECRRKKKEYVKCLENRVAVLENQNKTLIEELKTLKDLYSNKSV) enclose the bZIP domain. Positions 214-238 (KREIRLMKNREAARECRRKKKEYVK) are basic motif. Positions 240 to 261 (LENRVAVLENQNKTLIEELKTL) are leucine-zipper.

This sequence belongs to the bZIP family. ATF subfamily. Binds DNA as a dimer. Interacts with HIPK2 and CDK3. Interacts with MOTS-c, a peptide produced by the mitochondrially encoded 12S rRNA MT-RNR1; the interaction occurs in the nucleus following metabolic stress. Post-translationally, phosphorylated at Ser-197 by HIPK2 in response to genotoxic stress. This phosphorylation promotes transcription repression of FTH1 and other antioxidant detoxification genes. The CDK3-mediated phosphorylation at Ser-63 promotes its transactivation and transcriptional activities. Phosphorylated at Ser-63 by RPS6KA4 and RPS6KA5 in response to mitogenic or stress stimuli.

The protein resides in the nucleus. This protein binds the cAMP response element (CRE) (consensus: 5'-GTGACGT[AC][AG]-3'), a sequence present in many viral and cellular promoters. Mediates PKA-induced stimulation of CRE-reporter genes. Represses the expression of FTH1 and other antioxidant detoxification genes. Triggers cell proliferation and transformation. This Bos taurus (Bovine) protein is Cyclic AMP-dependent transcription factor ATF-1 (ATF1).